Here is a 20-residue protein sequence, read N- to C-terminus: Photosystem II stability/assembly factor HCF136, chloroplastic (20 aa).

The protein belongs to the Ycf48 family.

The protein resides in the plastid. It localises to the chloroplast thylakoid lumen. Its function is as follows. Essential for photosystem II (PSII) biogenesis; required for assembly of an early intermediate in PSII assembly that includes D2 (psbD) and cytochrome b559. This Spinacia oleracea (Spinach) protein is Photosystem II stability/assembly factor HCF136, chloroplastic.